Consider the following 366-residue polypeptide: Growth/differentiation factor 3 (366 aa).

An N-terminal signal peptide occupies residues 1 to 22 (MQPYQRLLALGFLLLTLPWGQT). Positions 23–252 (SEFQDSDLLQ…HCHPSSRKRR (230 aa)) are excised as a propeptide. N-linked (GlcNAc...) asparagine glycans are attached at residues Asn113 and Asn308. Cystine bridges form between Cys266-Cys331, Cys295-Cys363, and Cys299-Cys365.

Belongs to the TGF-beta family. As to quaternary structure, homodimer. Heterodimer (Potential). But, in contrast to other members of this family, cannot be disulfide-linked. Synthesized as large precursor molecule that undergo proteolytic cleavage, releasing the pro-domain from the active, receptor binding, C-terminal region of the molecule. In terms of tissue distribution, primarily in adult bone marrow, spleen, thymus and adipose tissue.

It localises to the secreted. It is found in the cytoplasm. Its function is as follows. Growth factor involved in early embryonic development and adipose-tissue homeostasis. During embryogenesis controls formation of anterior visceral endoderm and mesoderm and the establishment of anterior-posterior identity through a receptor complex comprising the receptor ACVR1B and the coreceptor CRIPTO. Regulates adipose-tissue homeostasis and energy balance under nutrient overload in part by signaling through the receptor complex based on ACVR1C and CRIPTO. The polypeptide is Growth/differentiation factor 3 (Gdf3) (Mus musculus (Mouse)).